We begin with the raw amino-acid sequence, 377 residues long: ATP phosphoribosyltransferase regulatory subunit (377 aa).

It belongs to the class-II aminoacyl-tRNA synthetase family. HisZ subfamily. In terms of assembly, heteromultimer composed of HisG and HisZ subunits.

It localises to the cytoplasm. It functions in the pathway amino-acid biosynthesis; L-histidine biosynthesis; L-histidine from 5-phospho-alpha-D-ribose 1-diphosphate: step 1/9. In terms of biological role, required for the first step of histidine biosynthesis. May allow the feedback regulation of ATP phosphoribosyltransferase activity by histidine. This Sinorhizobium medicae (strain WSM419) (Ensifer medicae) protein is ATP phosphoribosyltransferase regulatory subunit.